Here is a 214-residue protein sequence, read N- to C-terminus: Thiamine-phosphate synthase (214 aa).

4-amino-2-methyl-5-(diphosphooxymethyl)pyrimidine is bound by residues Q40–K44 and N72. Residues D73 and D92 each coordinate Mg(2+). S110 lines the 4-amino-2-methyl-5-(diphosphooxymethyl)pyrimidine pocket. Residue S137–T139 participates in 2-[(2R,5Z)-2-carboxy-4-methylthiazol-5(2H)-ylidene]ethyl phosphate binding. K140 is a 4-amino-2-methyl-5-(diphosphooxymethyl)pyrimidine binding site. 2-[(2R,5Z)-2-carboxy-4-methylthiazol-5(2H)-ylidene]ethyl phosphate-binding positions include G167 and I185–S186.

This sequence belongs to the thiamine-phosphate synthase family. Mg(2+) serves as cofactor.

The enzyme catalyses 2-[(2R,5Z)-2-carboxy-4-methylthiazol-5(2H)-ylidene]ethyl phosphate + 4-amino-2-methyl-5-(diphosphooxymethyl)pyrimidine + 2 H(+) = thiamine phosphate + CO2 + diphosphate. It carries out the reaction 2-(2-carboxy-4-methylthiazol-5-yl)ethyl phosphate + 4-amino-2-methyl-5-(diphosphooxymethyl)pyrimidine + 2 H(+) = thiamine phosphate + CO2 + diphosphate. It catalyses the reaction 4-methyl-5-(2-phosphooxyethyl)-thiazole + 4-amino-2-methyl-5-(diphosphooxymethyl)pyrimidine + H(+) = thiamine phosphate + diphosphate. It functions in the pathway cofactor biosynthesis; thiamine diphosphate biosynthesis; thiamine phosphate from 4-amino-2-methyl-5-diphosphomethylpyrimidine and 4-methyl-5-(2-phosphoethyl)-thiazole: step 1/1. Its function is as follows. Condenses 4-methyl-5-(beta-hydroxyethyl)thiazole monophosphate (THZ-P) and 2-methyl-4-amino-5-hydroxymethyl pyrimidine pyrophosphate (HMP-PP) to form thiamine monophosphate (TMP). The protein is Thiamine-phosphate synthase of Wolinella succinogenes (strain ATCC 29543 / DSM 1740 / CCUG 13145 / JCM 31913 / LMG 7466 / NCTC 11488 / FDC 602W) (Vibrio succinogenes).